The sequence spans 113 residues: MHILDKVDAAQLRDDIPEFRAGDTVDVHLKVIEGSKSRVQVFRGVVIKRQGSGIRETFTVRKVSFGIGVERTIPVHSPNIDKLEVLSRGKVRRAKLYYLRDRHGKAAKIKEKR.

It belongs to the bacterial ribosomal protein bL19 family.

This protein is located at the 30S-50S ribosomal subunit interface and may play a role in the structure and function of the aminoacyl-tRNA binding site. The chain is Large ribosomal subunit protein bL19 from Corynebacterium urealyticum (strain ATCC 43042 / DSM 7109).